We begin with the raw amino-acid sequence, 129 residues long: Large ribosomal subunit protein bL19 (129 aa).

This sequence belongs to the bacterial ribosomal protein bL19 family.

Functionally, this protein is located at the 30S-50S ribosomal subunit interface and may play a role in the structure and function of the aminoacyl-tRNA binding site. The polypeptide is Large ribosomal subunit protein bL19 (Bordetella avium (strain 197N)).